The sequence spans 201 residues: Recombination protein RecR (201 aa).

The C4-type zinc finger occupies 57 to 72; that stretch reads CADCRTFTEQDVCNIC. The Toprim domain maps to 81–176; that stretch reads GQICVVESPA…SASRIAHGVP (96 aa).

It belongs to the RecR family.

In terms of biological role, may play a role in DNA repair. It seems to be involved in an RecBC-independent recombinational process of DNA repair. It may act with RecF and RecO. The polypeptide is Recombination protein RecR (Enterobacter sp. (strain 638)).